The sequence spans 225 residues: Phosphoribosyltransferase domain-containing protein 1 (225 aa).

The residue at position 2 (Ala-2) is an N-acetylalanine. 2 residues coordinate Mg(2+): Glu-141 and Asp-142. Residues 141 to 149 (EDVVGTGRT), Lys-173, 194 to 195 (FV), and Asp-201 each bind GMP. Asp-201 is a binding site for Mg(2+).

Belongs to the purine/pyrimidine phosphoribosyltransferase family. As to quaternary structure, homodimer.

Its function is as follows. Has low, barely detectable phosphoribosyltransferase activity (in vitro). Binds GMP, IMP and alpha-D-5-phosphoribosyl 1-pyrophosphate (PRPP). Is not expected to contribute to purine metabolism or GMP salvage. The polypeptide is Phosphoribosyltransferase domain-containing protein 1 (PRTFDC1) (Homo sapiens (Human)).